The primary structure comprises 766 residues: Coenzyme PQQ synthesis protein F (766 aa).

Residue His49 coordinates Zn(2+). Glu52 serves as the catalytic Proton acceptor. Zn(2+) is bound by residues His53 and Glu130.

The protein belongs to the peptidase M16 family. Zn(2+) serves as cofactor.

Its pathway is cofactor biosynthesis; pyrroloquinoline quinone biosynthesis. Functionally, required for coenzyme pyrroloquinoline quinone (PQQ) biosynthesis. It is thought that this protein is a protease that cleaves peptides bond in a small peptide (gene pqqA), providing the glutamate and tyrosine residues which are necessary for the synthesis of PQQ. This Pseudomonas putida (strain ATCC 47054 / DSM 6125 / CFBP 8728 / NCIMB 11950 / KT2440) protein is Coenzyme PQQ synthesis protein F (pqqF).